A 275-amino-acid chain; its full sequence is Polyamine aminopropyltransferase (275 aa).

The PABS domain maps to 2 to 235 (ELWFTEKQTK…GLWTFTIGSK (234 aa)). Glutamine 31 provides a ligand contact to S-methyl-5'-thioadenosine. 2 residues coordinate spermidine: histidine 62 and aspartate 86. S-methyl-5'-thioadenosine-binding positions include glutamate 106 and 137–138 (DG). Residue aspartate 155 is the Proton acceptor of the active site. 155–158 (DSTE) is a binding site for spermidine. Residue proline 162 coordinates S-methyl-5'-thioadenosine.

It belongs to the spermidine/spermine synthase family. Homodimer or homotetramer.

Its subcellular location is the cytoplasm. It carries out the reaction S-adenosyl 3-(methylsulfanyl)propylamine + putrescine = S-methyl-5'-thioadenosine + spermidine + H(+). It functions in the pathway amine and polyamine biosynthesis; spermidine biosynthesis; spermidine from putrescine: step 1/1. Its function is as follows. Catalyzes the irreversible transfer of a propylamine group from the amino donor S-adenosylmethioninamine (decarboxy-AdoMet) to putrescine (1,4-diaminobutane) to yield spermidine. The sequence is that of Polyamine aminopropyltransferase from Bacillus mycoides (strain KBAB4) (Bacillus weihenstephanensis).